A 1350-amino-acid polypeptide reads, in one-letter code: Tectonin beta-propeller repeat-containing protein (1350 aa).

TECPR repeat units follow at residues glycine 23 to histidine 59, leucine 233 to glycine 271, aspartate 280 to glycine 320, and lysine 336 to glycine 371. The span at serine 396–lysine 415 shows a compositional bias: low complexity. Disordered stretches follow at residues serine 396 to serine 420 and serine 671 to phenylalanine 691. A Galectin domain is found at tyrosine 816 to arginine 955. 4 TECPR repeats span residues methionine 966 to glycine 1000, aspartate 1187 to glycine 1223, aspartate 1232 to glutamate 1269, and serine 1278 to glycine 1322.

It belongs to the TECPR1 family.

In terms of biological role, involved in peroxisome biogenesis. In Drosophila melanogaster (Fruit fly), this protein is Tectonin beta-propeller repeat-containing protein (Pex23).